We begin with the raw amino-acid sequence, 105 residues long: MAKKVKSKVDTINTKIQLVMKSGKYVLGTQQSLKTLRQGRSKLVVISANCPPIRKAEIEYYCTLSKTPIHHYSGNNLDLGTACGRHFRACVLSITDVGDSDITSA.

The protein belongs to the eukaryotic ribosomal protein eL30 family.

The protein is Large ribosomal subunit protein eL30 (RPL30) of Trypanosoma brucei brucei.